The chain runs to 320 residues: Methylenetetrahydrofolate dehydrogenase [NAD(+)] (320 aa).

Cysteine 152 is a catalytic residue. NAD(+) contacts are provided by residues 187-188 (RS) and 210-211 (DI).

The protein belongs to the tetrahydrofolate dehydrogenase/cyclohydrolase family. In terms of assembly, homodimer.

The protein resides in the cytoplasm. It localises to the nucleus. It carries out the reaction (6R)-5,10-methylene-5,6,7,8-tetrahydrofolate + NAD(+) = (6R)-5,10-methenyltetrahydrofolate + NADH. The protein operates within one-carbon metabolism; tetrahydrofolate interconversion. Its function is as follows. Catalyzes oxidation of cytoplasmic one-carbon units for purine biosynthesis. This chain is Methylenetetrahydrofolate dehydrogenase [NAD(+)] (mtd1), found in Schizosaccharomyces pombe (strain 972 / ATCC 24843) (Fission yeast).